Reading from the N-terminus, the 101-residue chain is Iron-sulfur cluster assembly protein CyaY (101 aa).

This sequence belongs to the frataxin family.

In terms of biological role, involved in iron-sulfur (Fe-S) cluster assembly. May act as a regulator of Fe-S biogenesis. This chain is Iron-sulfur cluster assembly protein CyaY, found in Actinobacillus pleuropneumoniae serotype 5b (strain L20).